A 116-amino-acid polypeptide reads, in one-letter code: Large ribosomal subunit protein bL20 (116 aa).

Belongs to the bacterial ribosomal protein bL20 family.

Its function is as follows. Binds directly to 23S ribosomal RNA and is necessary for the in vitro assembly process of the 50S ribosomal subunit. It is not involved in the protein synthesizing functions of that subunit. This Bacteroides fragilis (strain ATCC 25285 / DSM 2151 / CCUG 4856 / JCM 11019 / LMG 10263 / NCTC 9343 / Onslow / VPI 2553 / EN-2) protein is Large ribosomal subunit protein bL20.